A 341-amino-acid polypeptide reads, in one-letter code: Probable GDP-mannose transporter 2 (341 aa).

Residues 1–11 (MSKHKHEWTES) lie on the Cytoplasmic side of the membrane. The chain crosses the membrane as a helical span at residues 12-32 (VANSGPASILSYCASSILMTV). Over 33–46 (TNKFVVNLDNFNMN) the chain is Lumenal. Residues 47–67 (FVMLFVQSLVCTVTLCILRIV) form a helical membrane-spanning segment. Topologically, residues 68–85 (GVANFRSLNRTDVKNWFP) are cytoplasmic. A helical transmembrane segment spans residues 86–106 (ISLLLVLMIYTSLKSLQYLAV). Position 107 (proline 107) is a topological domain, lumenal. Residues 108-128 (IYTIFKNLTIILIAYGEVLFF) form a helical membrane-spanning segment. Residues 129 to 139 (GGKVTSMELTS) are Cytoplasmic-facing. The chain crosses the membrane as a helical span at residues 140-160 (FIMMVLSSVVATWGDQQAIAI). The Lumenal segment spans residues 161–176 (KASSLEDLDQELVEST). A helical membrane pass occupies residues 177–197 (IFVLNPGYLWMFTNCISSALF). Residues 198 to 214 (VLIMRKRIRLTNFKDYD) are Cytoplasmic-facing. A helical membrane pass occupies residues 215-235 (TMFYNNVLALPLLLVFSFIME). Residues 236–251 (DWSTKNLSVNLSADSL) are Lumenal-facing. Residues asparagine 241 and asparagine 245 are each glycosylated (N-linked (GlcNAc...) asparagine). A helical transmembrane segment spans residues 252-272 (AAMVISGLMSVGISYCSGWCV). The Cytoplasmic segment spans residues 273–278 (RVTSST). The helical transmembrane segment at 279-299 (TYSMVGALNKLPIALAGLVFF) threads the bilayer. Topologically, residues 300 to 303 (DAPK) are lumenal. Residues 304–324 (NFLSFFSIFLGFLSGLLYAVA) form a helical membrane-spanning segment. Over 325 to 341 (KQKKIQQQKVLAATLEK) the chain is Cytoplasmic.

The protein belongs to the TPT transporter family. SLC35D subfamily.

The protein localises to the golgi apparatus membrane. Its subcellular location is the cytoplasmic vesicle membrane. It localises to the endoplasmic reticulum membrane. Its function is as follows. Involved in the import of GDP-mannose from the cytoplasm into the Golgi lumen. The protein is Probable GDP-mannose transporter 2 (HVG1) of Saccharomyces cerevisiae (strain Lalvin EC1118 / Prise de mousse) (Baker's yeast).